The sequence spans 367 residues: Phosphoribosylformylglycinamidine cyclo-ligase (367 aa).

The protein belongs to the AIR synthase family.

It localises to the cytoplasm. It carries out the reaction 2-formamido-N(1)-(5-O-phospho-beta-D-ribosyl)acetamidine + ATP = 5-amino-1-(5-phospho-beta-D-ribosyl)imidazole + ADP + phosphate + H(+). Its pathway is purine metabolism; IMP biosynthesis via de novo pathway; 5-amino-1-(5-phospho-D-ribosyl)imidazole from N(2)-formyl-N(1)-(5-phospho-D-ribosyl)glycinamide: step 2/2. This chain is Phosphoribosylformylglycinamidine cyclo-ligase, found in Cyanothece sp. (strain PCC 7425 / ATCC 29141).